The sequence spans 189 residues: UPF0301 protein PFLU_5755 (189 aa).

This sequence belongs to the UPF0301 (AlgH) family.

The protein is UPF0301 protein PFLU_5755 of Pseudomonas fluorescens (strain SBW25).